Consider the following 201-residue polypeptide: Cytochrome c oxidase assembly protein CtaG (201 aa).

The Cytoplasmic portion of the chain corresponds to 1-13 (MTDQGENEKKQRR). A helical; Signal-anchor for type II membrane protein membrane pass occupies residues 14 to 36 (SNATIAVACLSFFVCMIGAAYAS). Residues 37-201 (VPLYRIFCQV…KAVGSTRNGG (165 aa)) are Periplasmic-facing.

The protein belongs to the COX11/CtaG family.

It is found in the cell inner membrane. In terms of biological role, exerts its effect at some terminal stage of cytochrome c oxidase synthesis, probably by being involved in the insertion of the copper B into subunit I. This chain is Cytochrome c oxidase assembly protein CtaG, found in Brucella ovis (strain ATCC 25840 / 63/290 / NCTC 10512).